Here is a 360-residue protein sequence, read N- to C-terminus: Protein phosphatase 1 regulatory subunit 7 (360 aa).

Positions 1–63 (MAAERGAGQQ…RGAEDPEEEH (63 aa)) are disordered. The residue at position 2 (A2) is an N-acetylalanine. Phosphoserine is present on residues S12, S24, S27, S44, and S47. The span at 17 to 34 (EVDRRVESEESGDEEGKK) shows a compositional bias: basic and acidic residues. LRR repeat units lie at residues 77–98 (DAED…EVLK), 99–120 (KVKS…DELQ), 121–142 (SLRE…EALT), 143–164 (ELEV…DKLT), 165–186 (QLKK…STLQ), 187–208 (QLQM…DTLT), 209–230 (NLES…DALS), 231–252 (NLTV…QNLV), 253–274 (NLRE…ENNN), 275–296 (KLTM…SHLT), and 297–318 (ELQE…DELK). Phosphoserine is present on S322. The 30-residue stretch at 331–360 (NPLQKDPQYRRKVMLALPSVRQIDATFVRF) folds into the LRRCT domain.

Belongs to the SDS22 family. In terms of assembly, interacts with PPP1CA, PPP1CB and PPP1CC/PPP1G.

Its subcellular location is the nucleus. Functionally, regulatory subunit of protein phosphatase 1. This is Protein phosphatase 1 regulatory subunit 7 (Ppp1r7) from Rattus norvegicus (Rat).